Here is a 538-residue protein sequence, read N- to C-terminus: Chaperonin GroEL (538 aa).

Residues 29–32, 86–90, Gly413, 479–481, and Asp495 each bind ATP; these read TLGP, DGTTT, and DAL.

This sequence belongs to the chaperonin (HSP60) family. In terms of assembly, forms a cylinder of 14 subunits composed of two heptameric rings stacked back-to-back. Interacts with the co-chaperonin GroES.

Its subcellular location is the cytoplasm. The catalysed reaction is ATP + H2O + a folded polypeptide = ADP + phosphate + an unfolded polypeptide.. Its function is as follows. Together with its co-chaperonin GroES, plays an essential role in assisting protein folding. The GroEL-GroES system forms a nano-cage that allows encapsulation of the non-native substrate proteins and provides a physical environment optimized to promote and accelerate protein folding. The polypeptide is Chaperonin GroEL (Thermotoga maritima (strain ATCC 43589 / DSM 3109 / JCM 10099 / NBRC 100826 / MSB8)).